A 475-amino-acid chain; its full sequence is Sensor histidine kinase QseE (475 aa).

Over 1 to 13 (MKRWPVFPRSLRQ) the chain is Cytoplasmic. The chain crosses the membrane as a helical span at residues 14–34 (LVMLAFLLILLPLLVLAWQAW). Residues 35–173 (QSLNALSDQA…LQREIAERGQ (139 aa)) lie on the Periplasmic side of the membrane. The chain crosses the membrane as a helical span at residues 174–194 (YFGWQSLVLFLVSLVMVLLFT). Over 195 to 475 (RMIIGPVKNI…IELPSSKNTK (281 aa)) the chain is Cytoplasmic. Positions 256–472 (HLSHELKTPL…CFRIELPSSK (217 aa)) constitute a Histidine kinase domain. His259 is subject to Phosphohistidine; by autocatalysis.

In terms of processing, autophosphorylated.

It localises to the cell inner membrane. It catalyses the reaction ATP + protein L-histidine = ADP + protein N-phospho-L-histidine.. Functionally, member of the two-component regulatory system QseF/QseE involved in the regulation of virulence and metabolism in EHEC. Required for pedestal formation in host epithelial cells during infection. Autophosphorylates in response to epinephrine, sulfate or phosphate and then probably transfers its phosphate group to QseF. In Escherichia coli O157:H7, this protein is Sensor histidine kinase QseE (qseE).